Here is a 528-residue protein sequence, read N- to C-terminus: Glutamyl-tRNA(Gln) amidotransferase subunit A, mitochondrial (528 aa).

Lys76 (charge relay system) is an active-site residue. Residues 147–166 are disordered; it reads QYREKRKQNPHSKNEDSDWL. The active-site Charge relay system is the Ser171. Ser195 functions as the Acyl-ester intermediate in the catalytic mechanism.

This sequence belongs to the amidase family. GatA subfamily. In terms of assembly, subunit of the heterotrimeric GatCAB amidotransferase (AdT) complex, composed of A (QRSL1), B (GATB) and C (GATC) subunits.

The protein localises to the mitochondrion. The catalysed reaction is L-glutamyl-tRNA(Gln) + L-glutamine + ATP + H2O = L-glutaminyl-tRNA(Gln) + L-glutamate + ADP + phosphate + H(+). Functionally, allows the formation of correctly charged Gln-tRNA(Gln) through the transamidation of misacylated Glu-tRNA(Gln) in the mitochondria. The reaction takes place in the presence of glutamine and ATP through an activated gamma-phospho-Glu-tRNA(Gln). The polypeptide is Glutamyl-tRNA(Gln) amidotransferase subunit A, mitochondrial (Macaca fascicularis (Crab-eating macaque)).